The sequence spans 156 residues: Longistatin (156 aa).

A signal peptide spans 1-21; that stretch reads MTHRRLLWALCVAALLGVVAA. EF-hand domains are found at residues 70 to 105 and 123 to 156; these read SQDELYFYYFRMHDFDNNNKLDGQEMMAAMFHTNHH and DIASYVDSVLRADKNQDGFISYPELRTSDLTNQI. Ca(2+) is bound by residues aspartate 83, aspartate 85, asparagine 87, lysine 89, glutamate 94, aspartate 135, asparagine 137, aspartate 139, phenylalanine 141, and glutamate 146.

As to quaternary structure, interacts with host fibrin. Interacts with human RAGE/AGER. As to expression, saliva (at protein level). Salivary gland (at protein level). Not detected in midgut, ovary, trachea, Malpighian tubule system, synganglion and cuticle.

The protein resides in the secreted. It localises to the cytoplasm. Its activity is regulated as follows. Resistant to inhibition by host SERPINE1. Inhibited by PMSF, aprotinin, antipain and leupeptin. Inhibited by Zn(2+). In terms of biological role, anticoagulant and fibrinolytic protease that modulates blood feeding of ticks on vertebrate hosts. Degrades host fibrinogen and delays fibrin clot formation. Promotes lysis of fibrin clots in the host by activating host plasminogen in the presence of soluble fibrin. Binds Ca(2+). Hydrolyzes serine protease-specific substrates. Required for the formation of a blood pool, an accumulation of blood and tissue fluid developed at the tick's feeding site. Blocks activation of host AGER/RAGE. Reduces AGER/RAGE-dependent production of reactive oxygen species (ROS) in human endothelial cells. Prevents AGER/RAGE-dependent activation of NF-kappa-B and suppresses expression of adhesion molecules, such as VCAM1, ICAM1 and SELE, and secretion of cytokines, such as CSF3/GCSF and TGF-beta, in human endothelial cells. Suppresses RAGE/AGER-mediated migration of mouse peritoneal resident cells. Reduces AGER/RAGE-mediated inflammation in mice tissues. The protein is Longistatin of Haemaphysalis longicornis (Bush tick).